A 364-amino-acid polypeptide reads, in one-letter code: MSGNSIGQNFVVTTFGESHGKALGCIIDGCPPGLAIDEADMQHDLDRRRPGTSRYTTARREPDQVKILSGVFEGQTTGTSIGLVIENTDQRSQDYSNIKDQFRPGHADYTYQQKYGLRDYRGGGRSSARETAMRVAAGAVAKKYLKQVHGIEIKGYLSQLGPICAEILDFDQVEHNAFFFPDAAKLEQLDEYMRELKKSGDSIGAKVSVVATNVPVGLGEPVFDRLDADIAHALMGINAVKGVEIGDGFAVVNQKGSEHRDLMSPEGFASNHAGGILGGISSGQPIVAHIAMKPTSSISVPGESMTVQGERAEVVTKGRHDPCVGIRAVPIAEAMLAIVLMDHLLRHRAQNMNVESITPVIGMK.

NADP(+) is bound by residues Arg48 and Arg54. FMN-binding positions include 125-127 (RSS), 238-239 (NA), Gly278, 293-297 (KPTSS), and Arg319.

The protein belongs to the chorismate synthase family. Homotetramer. FMNH2 serves as cofactor.

It catalyses the reaction 5-O-(1-carboxyvinyl)-3-phosphoshikimate = chorismate + phosphate. It participates in metabolic intermediate biosynthesis; chorismate biosynthesis; chorismate from D-erythrose 4-phosphate and phosphoenolpyruvate: step 7/7. Catalyzes the anti-1,4-elimination of the C-3 phosphate and the C-6 proR hydrogen from 5-enolpyruvylshikimate-3-phosphate (EPSP) to yield chorismate, which is the branch point compound that serves as the starting substrate for the three terminal pathways of aromatic amino acid biosynthesis. This reaction introduces a second double bond into the aromatic ring system. The chain is Chorismate synthase from Shewanella loihica (strain ATCC BAA-1088 / PV-4).